We begin with the raw amino-acid sequence, 269 residues long: Small ribosomal subunit protein eS1 (269 aa).

The tract at residues 1-20 (MAVGKNKGVSKGGKKGSKKK) is disordered.

It belongs to the eukaryotic ribosomal protein eS1 family. As to quaternary structure, component of the small ribosomal subunit. Mature ribosomes consist of a small (40S) and a large (60S) subunit. The 40S subunit contains about 33 different proteins and 1 molecule of RNA (18S). The 60S subunit contains about 49 different proteins and 3 molecules of RNA (28S, 5.8S and 5S).

The protein localises to the cytoplasm. Has an essential role in oogenesis. The polypeptide is Small ribosomal subunit protein eS1 (Anopheles gambiae (African malaria mosquito)).